The primary structure comprises 467 residues: UDP-N-acetylmuramate--L-alanine ligase (467 aa).

112–118 (GTHGKTT) is a binding site for ATP.

Belongs to the MurCDEF family.

It is found in the cytoplasm. It carries out the reaction UDP-N-acetyl-alpha-D-muramate + L-alanine + ATP = UDP-N-acetyl-alpha-D-muramoyl-L-alanine + ADP + phosphate + H(+). It participates in cell wall biogenesis; peptidoglycan biosynthesis. Its function is as follows. Cell wall formation. This is UDP-N-acetylmuramate--L-alanine ligase from Polaromonas sp. (strain JS666 / ATCC BAA-500).